The chain runs to 354 residues: NADH-quinone oxidoreductase subunit H (354 aa).

The next 8 membrane-spanning stretches (helical) occupy residues 22 to 42 (ILIR…YLIL), 91 to 111 (YLIA…VIPF), 124 to 144 (LLYV…AGWA), 168 to 188 (MGFA…SAIV), 203 to 223 (ILSW…ISGV), 255 to 275 (LFFL…ALMF), 291 to 311 (IPGF…FIWI), and 326 to 346 (LGWK…AIWI).

This sequence belongs to the complex I subunit 1 family. As to quaternary structure, NDH-1 is composed of 14 different subunits. Subunits NuoA, H, J, K, L, M, N constitute the membrane sector of the complex.

It is found in the cell inner membrane. It carries out the reaction a quinone + NADH + 5 H(+)(in) = a quinol + NAD(+) + 4 H(+)(out). Its function is as follows. NDH-1 shuttles electrons from NADH, via FMN and iron-sulfur (Fe-S) centers, to quinones in the respiratory chain. The immediate electron acceptor for the enzyme in this species is believed to be ubiquinone. Couples the redox reaction to proton translocation (for every two electrons transferred, four hydrogen ions are translocated across the cytoplasmic membrane), and thus conserves the redox energy in a proton gradient. This subunit may bind ubiquinone. This is NADH-quinone oxidoreductase subunit H from Cupriavidus necator (strain ATCC 17699 / DSM 428 / KCTC 22496 / NCIMB 10442 / H16 / Stanier 337) (Ralstonia eutropha).